Consider the following 409-residue polypeptide: Elongation factor 1-gamma (409 aa).

The 80-residue stretch at 2–81 (SVGTVYGKIG…YLASLNKTRA (80 aa)) folds into the GST N-terminal domain. A GST C-terminal domain is found at 86–212 (TAEEKAKVLQ…EPLKFIDQPL (127 aa)). Residues 219–248 (NKEAAPAKKAEKKKDEKKKNAPKPQAERPA) show a composition bias toward basic and acidic residues. Residues 219 to 261 (NKEAAPAKKAEKKKDEKKKNAPKPQAERPAKPPKHPLASAPNG) are disordered. One can recognise an EF-1-gamma C-terminal domain in the interval 251–409 (PKHPLASAPN…REVADGKVCK (159 aa)).

As to quaternary structure, EF-1 is composed of four subunits: alpha, beta, delta, and gamma.

Functionally, probably plays a role in anchoring the complex to other cellular components. In Schizosaccharomyces pombe (strain 972 / ATCC 24843) (Fission yeast), this protein is Elongation factor 1-gamma (tef3).